The following is a 124-amino-acid chain: Keratin-associated protein 12-2 (124 aa).

A run of 20 repeats spans residues 10-13 (CQAA), 14-18 (CVPSS), 19-23 (CQPSC), 24-28 (STSSP), 33-38 (CFTSSL), 39-43 (CQPTC), 44-48 (STSST), 49-52 (CQAT), 53-57 (CVPVS), 58-62 (YRPAV), 63-67 (CLPVT), 68-72 (YKPTL), 73-77 (CVTPS), 78-82 (CQSSV), 83-87 (FLPVS), 88-92 (YRPAV), 98-102 (CQSSG), 103-107 (CYQPS), 108-112 (CPTLV), and 113-117 (YRPIS). Residues 10 to 117 (CQAACVPSSC…CPTLVYRPIS (108 aa)) are 20 X 5 AA approximate repeats.

This sequence belongs to the KRTAP type 12 family. Interacts with hair keratins.

Its function is as follows. In the hair cortex, hair keratin intermediate filaments are embedded in an interfilamentous matrix, consisting of hair keratin-associated proteins (KRTAP), which are essential for the formation of a rigid and resistant hair shaft through their extensive disulfide bond cross-linking with abundant cysteine residues of hair keratins. The matrix proteins include the high-sulfur and high-glycine-tyrosine keratins. The sequence is that of Keratin-associated protein 12-2 from Bos taurus (Bovine).